The sequence spans 216 residues: Large ribosomal subunit protein bL21 (216 aa).

This sequence belongs to the bacterial ribosomal protein bL21 family. As to quaternary structure, part of the 50S ribosomal subunit. Contacts protein L20.

Functionally, this protein binds to 23S rRNA in the presence of protein L20. The chain is Large ribosomal subunit protein bL21 from Roseobacter denitrificans (strain ATCC 33942 / OCh 114) (Erythrobacter sp. (strain OCh 114)).